Here is a 223-residue protein sequence, read N- to C-terminus: Ribosome maturation factor RimM (223 aa).

A compositionally biased stretch (low complexity) spans 1 to 12 (MARRPGSSSRGP). Disordered stretches follow at residues 1–44 (MARR…DPGL) and 204–223 (ADPPDDLFAPPGPKPADDPG). In terms of domain architecture, PRC barrel spans 136-210 (EDEFFLTDLI…KVVADPPDDL (75 aa)).

This sequence belongs to the RimM family. As to quaternary structure, binds ribosomal protein uS19.

It localises to the cytoplasm. An accessory protein needed during the final step in the assembly of 30S ribosomal subunit, possibly for assembly of the head region. Essential for efficient processing of 16S rRNA. May be needed both before and after RbfA during the maturation of 16S rRNA. It has affinity for free ribosomal 30S subunits but not for 70S ribosomes. The protein is Ribosome maturation factor RimM of Methylorubrum extorquens (strain PA1) (Methylobacterium extorquens).